A 296-amino-acid chain; its full sequence is Centromere protein O (296 aa).

The stretch at 17–105 forms a coiled coil; it reads VLAHLERLET…NMKAILQAYR (89 aa).

The protein belongs to the CENP-O/MCM21 family. Component of the CENPA-CAD complex, composed of CENPI, CENPK, CENPL, CENPO, CENPP, CENPQ, CENPR and CENPS. The CENPA-CAD complex interacts with the CENPA-NAC complex, at least composed of CENPA, CENPC, CENPH, CENPM, CENPN, CENPT and CENPU.

Its subcellular location is the nucleus. It localises to the chromosome. The protein localises to the centromere. It is found in the kinetochore. Component of the CENPA-CAD (nucleosome distal) complex, a complex recruited to centromeres which is involved in assembly of kinetochore proteins, mitotic progression and chromosome segregation. May be involved in incorporation of newly synthesized CENPA into centromeres via its interaction with the CENPA-NAC complex. Modulates the kinetochore-bound levels of NDC80 complex. In Bos taurus (Bovine), this protein is Centromere protein O (CENPO).